A 239-amino-acid polypeptide reads, in one-letter code: Probable transcriptional regulatory protein BCG9842_B4761 (239 aa).

Belongs to the TACO1 family. YeeN subfamily.

It is found in the cytoplasm. The protein is Probable transcriptional regulatory protein BCG9842_B4761 of Bacillus cereus (strain G9842).